A 465-amino-acid polypeptide reads, in one-letter code: Tetratricopeptide repeat protein 38 (465 aa).

TPR repeat units follow at residues 104 to 137 (REQL…HPTD), 176 to 209 (SYVK…EPTD), and 248 to 281 (CHNY…SLQA).

The protein belongs to the TTC38 family.

The chain is Tetratricopeptide repeat protein 38 (Ttc38) from Mus musculus (Mouse).